The primary structure comprises 385 residues: Protein pelota homolog (385 aa).

A Glycyl lysine isopeptide (Lys-Gly) (interchain with G-Cter in SUMO2) cross-link involves residue Lys162. A phosphoserine mark is found at Ser374, Ser380, Ser381, and Ser382.

It belongs to the eukaryotic release factor 1 family. Pelota subfamily. Component of the Pelota-HBS1L complex, also named Dom34-Hbs1 complex, composed of PELO and HBS1L. Interacts with PINK1. Interacts with ABCE1. Interacts with CNOT4. The cofactor is a divalent metal cation.

Its subcellular location is the cytoplasm. Its function is as follows. Component of the Pelota-HBS1L complex, a complex that recognizes stalled ribosomes and triggers the No-Go Decay (NGD) pathway. In the Pelota-HBS1L complex, PELO recognizes ribosomes stalled at the 3' end of an mRNA and engages stalled ribosomes by destabilizing mRNA in the mRNA channel. Following mRNA extraction from stalled ribosomes by the SKI complex, the Pelota-HBS1L complex promotes recruitment of ABCE1, which drives the disassembly of stalled ribosomes, followed by degradation of damaged mRNAs as part of the NGD pathway. As part of the PINK1-regulated signaling, upon mitochondrial damage is recruited to the ribosome/mRNA-ribonucleoprotein complex associated to mitochondrial outer membrane thereby enabling the recruitment of autophagy receptors and induction of mitophagy. The sequence is that of Protein pelota homolog (PELO) from Pongo abelii (Sumatran orangutan).